The following is a 128-amino-acid chain: Ribonuclease pancreatic (128 aa).

Positions 1–13 (GESRAEKFQRQHM) are enriched in basic and acidic residues. The tract at residues 1-24 (GESRAEKFQRQHMDSGSSPSSSST) is disordered. Substrate contacts are provided by Lys-7 and Arg-10. Catalysis depends on His-12, which acts as the Proton acceptor. 4 cysteine pairs are disulfide-bonded: Cys-26-Cys-84, Cys-40-Cys-95, Cys-58-Cys-110, and Cys-65-Cys-72. Residue Asn-34 is glycosylated (N-linked (GlcNAc...) asparagine). Substrate-binding positions include 41 to 45 (KSVNT), Lys-66, and Arg-85. His-119 functions as the Proton donor in the catalytic mechanism.

This sequence belongs to the pancreatic ribonuclease family. Monomer. Interacts with and forms tight 1:1 complexes with RNH1. Dimerization of two such complexes may occur. Interaction with RNH1 inhibits this protein. Pancreas and other tissues and body fluids (indicating it may have other physiological functions besides its role in digestion).

It is found in the secreted. It carries out the reaction an [RNA] containing cytidine + H2O = an [RNA]-3'-cytidine-3'-phosphate + a 5'-hydroxy-ribonucleotide-3'-[RNA].. It catalyses the reaction an [RNA] containing uridine + H2O = an [RNA]-3'-uridine-3'-phosphate + a 5'-hydroxy-ribonucleotide-3'-[RNA].. Its function is as follows. Endonuclease that catalyzes the cleavage of RNA on the 3' side of pyrimidine nucleotides. Acts on single-stranded and double-stranded RNA. This is Ribonuclease pancreatic (RNASE1) from Semnopithecus entellus (Northern plains gray langur).